Reading from the N-terminus, the 496-residue chain is Glutamyl-tRNA(Gln) amidotransferase subunit B, organellar chromatophore (496 aa).

This sequence belongs to the GatB/GatE family. GatB subfamily. Subunit of the heterotrimeric GatCAB amidotransferase (AdT) complex, composed of A, B and C subunits.

The protein resides in the plastid. It localises to the organellar chromatophore. The enzyme catalyses L-glutamyl-tRNA(Gln) + L-glutamine + ATP + H2O = L-glutaminyl-tRNA(Gln) + L-glutamate + ADP + phosphate + H(+). Its function is as follows. Allows the formation of correctly charged Gln-tRNA(Gln) through the transamidation of misacylated Glu-tRNA(Gln). The reaction takes place in the presence of glutamine and ATP through an activated gamma-phospho-Glu-tRNA(Gln). The sequence is that of Glutamyl-tRNA(Gln) amidotransferase subunit B, organellar chromatophore from Paulinella chromatophora.